A 651-amino-acid chain; its full sequence is UvrABC system protein C (651 aa).

The GIY-YIG domain maps to 20 to 97 (ERCGVYRMFD…IKKFQPKFNI (78 aa)). The region spanning 207 to 242 (KALQENLSKKMEELSSQMRFEEAAEIRDRIKALSYV) is the UVR domain.

This sequence belongs to the UvrC family. As to quaternary structure, interacts with UvrB in an incision complex.

The protein resides in the cytoplasm. In terms of biological role, the UvrABC repair system catalyzes the recognition and processing of DNA lesions. UvrC both incises the 5' and 3' sides of the lesion. The N-terminal half is responsible for the 3' incision and the C-terminal half is responsible for the 5' incision. This Rickettsia akari (strain Hartford) protein is UvrABC system protein C.